Consider the following 117-residue polypeptide: Immunoglobulin lambda variable 2 (117 aa).

The N-terminal stretch at 1–19 (MAWTSLILSLLALCSGASS) is a signal peptide. At Gln-20 the chain carries Pyrrolidone carboxylic acid. One can recognise an Ig-like domain in the interval 20 to 117 (QAVVTQESAL…FCALWYSTHF (98 aa)).

The polypeptide is Immunoglobulin lambda variable 2 (Mus musculus (Mouse)).